Consider the following 96-residue polypeptide: Co-chaperonin GroES (96 aa).

This sequence belongs to the GroES chaperonin family. As to quaternary structure, heptamer of 7 subunits arranged in a ring. Interacts with the chaperonin GroEL.

It localises to the cytoplasm. Together with the chaperonin GroEL, plays an essential role in assisting protein folding. The GroEL-GroES system forms a nano-cage that allows encapsulation of the non-native substrate proteins and provides a physical environment optimized to promote and accelerate protein folding. GroES binds to the apical surface of the GroEL ring, thereby capping the opening of the GroEL channel. This is Co-chaperonin GroES from Haemophilus influenzae (strain 86-028NP).